The primary structure comprises 306 residues: Phenylcoumaran benzylic ether reductase IRL1 (306 aa).

NADP(+) contacts are provided by residues 10–16, Arg35, and Lys44; that span reads GATGYIG. Lys132 (proton acceptor) is an active-site residue. NADP(+) is bound at residue Arg136.

Belongs to the NmrA-type oxidoreductase family. Isoflavone reductase subfamily. In terms of tissue distribution, highly expressed in sclerotesta. Expressed in roots, and two-to-four year stems.

It catalyses the reaction (-)-dehydrodiconiferyl alcohol + NADPH + H(+) = (S)-isodihydrodehydrodiconiferyl alcohol + NADP(+). The catalysed reaction is (+)-dehydrodiconiferyl alcohol + NADPH + H(+) = (R)-isodihydrodehydrodiconiferyl alcohol + NADP(+). It carries out the reaction (2R,3S)-dihydrodehydrodiconiferyl alcohol + NADPH + H(+) = (S)-tetrahydrodehydrodiconiferyl alcohol + NADP(+). The enzyme catalyses (2S,3R)-dihydrodehydrodiconiferyl alcohol + NADPH + H(+) = (R)-tetrahydrodehydrodiconiferyl alcohol + NADP(+). Oxidoreductase involved in lignan biosynthesis. Catalyzes the NADPH-dependent reduction of phenylcoumaran benzylic ethers. Converts dehydrodiconiferyl alcohol (DDC) to isodihydrodehydrodiconiferyl alcohol (IDDDC), and dihydrodehydrodiconiferyl alcohol (DDDC) to tetrahydrodehydrodiconiferyl alcohol (TDDC). May regulate changes in lignin content and accumulation of flavonoids. In Ginkgo biloba (Ginkgo), this protein is Phenylcoumaran benzylic ether reductase IRL1.